The following is a 450-amino-acid chain: uncharacterized protein (450 aa).

The segment covering 387–416 (ELDEKNNNKEENKNQDLHEPKESSSEDLLK) has biased composition (basic and acidic residues). The segment at 387–439 (ELDEKNNNKEENKNQDLHEPKESSSEDLLKRLNNLKINTNEGPVQDNENHDNE) is disordered.

This is an uncharacterized protein from Saccharomyces cerevisiae (strain ATCC 204508 / S288c) (Baker's yeast).